A 371-amino-acid chain; its full sequence is tRNA-specific 2-thiouridylase MnmA (371 aa).

Residues 13-20 (GMSGGVDS) and M39 each bind ATP. Residues 99–101 (NPD) form an interaction with target base in tRNA region. C104 (nucleophile) is an active-site residue. C104 and C200 form a disulfide bridge. G128 is a binding site for ATP. The interaction with tRNA stretch occupies residues 150–152 (KDQ). The active-site Cysteine persulfide intermediate is the C200. An interaction with tRNA region spans residues 308–309 (RY).

The protein belongs to the MnmA/TRMU family.

It is found in the cytoplasm. The catalysed reaction is S-sulfanyl-L-cysteinyl-[protein] + uridine(34) in tRNA + AH2 + ATP = 2-thiouridine(34) in tRNA + L-cysteinyl-[protein] + A + AMP + diphosphate + H(+). In terms of biological role, catalyzes the 2-thiolation of uridine at the wobble position (U34) of tRNA, leading to the formation of s(2)U34. The protein is tRNA-specific 2-thiouridylase MnmA of Listeria innocua serovar 6a (strain ATCC BAA-680 / CLIP 11262).